We begin with the raw amino-acid sequence, 414 residues long: Phosphoglycerate kinase (414 aa).

Residues 19–21 (DLN), Arg34, 57–60 (HQSK), Arg114, and Arg154 contribute to the substrate site. ATP contacts are provided by residues Glu332 and 358-361 (GGHS).

The protein belongs to the phosphoglycerate kinase family. As to quaternary structure, monomer.

The protein localises to the cytoplasm. The catalysed reaction is (2R)-3-phosphoglycerate + ATP = (2R)-3-phospho-glyceroyl phosphate + ADP. It functions in the pathway carbohydrate degradation; glycolysis; pyruvate from D-glyceraldehyde 3-phosphate: step 2/5. The protein is Phosphoglycerate kinase of Thermococcus onnurineus (strain NA1).